The sequence spans 368 residues: Molybdenum import ATP-binding protein ModC (368 aa).

Residues 1–231 (MKGLQVAFKQ…QAMRPWQSFS (231 aa)) form the ABC transporter domain. ATP is bound at residue 33 to 40 (GRSGAGKT). The Mop domain occupies 292-363 (KTSIRNIIEA…IKGVSVTQRD (72 aa)).

Belongs to the ABC transporter superfamily. Molybdate importer (TC 3.A.1.8) family. As to quaternary structure, the complex is composed of two ATP-binding proteins (ModC), two transmembrane proteins (ModB) and a solute-binding protein (ModA).

Its subcellular location is the cell inner membrane. It carries out the reaction molybdate(out) + ATP + H2O = molybdate(in) + ADP + phosphate + H(+). Its function is as follows. Part of the ABC transporter complex ModABC involved in molybdenum import. Responsible for energy coupling to the transport system. The polypeptide is Molybdenum import ATP-binding protein ModC (Vibrio vulnificus (strain YJ016)).